We begin with the raw amino-acid sequence, 208 residues long: Small ribosomal subunit protein uS4 (208 aa).

The 64-residue stretch at 97–160 (SRLDNIVFRL…KKNDKIAEAL (64 aa)) folds into the S4 RNA-binding domain.

This sequence belongs to the universal ribosomal protein uS4 family. In terms of assembly, part of the 30S ribosomal subunit. Contacts protein S5. The interaction surface between S4 and S5 is involved in control of translational fidelity.

One of the primary rRNA binding proteins, it binds directly to 16S rRNA where it nucleates assembly of the body of the 30S subunit. In terms of biological role, with S5 and S12 plays an important role in translational accuracy. The chain is Small ribosomal subunit protein uS4 from Mesoplasma florum (strain ATCC 33453 / NBRC 100688 / NCTC 11704 / L1) (Acholeplasma florum).